Consider the following 187-residue polypeptide: MPHSMPPAPAPIWLVQSRLSPFPGTAVANWLFDEGSLTRRLTRLSHNAFSVTPLVQEWQTLRNDECAALGLPEQSEGWVREVYLRGHGQAWVFARSVAARSALLEGGLNIDELGSRSLGELLFCDQAFTRQPIEVCRYPRHWLPAAVADNGLWGRRSRFDRGPLSLLVAEIFLPSLWTAIDARPEAC.

Arg80, Leu118, and Glu170 together coordinate substrate.

This sequence belongs to the UbiC family.

It is found in the cytoplasm. The catalysed reaction is chorismate = 4-hydroxybenzoate + pyruvate. It functions in the pathway cofactor biosynthesis; ubiquinone biosynthesis. In terms of biological role, removes the pyruvyl group from chorismate, with concomitant aromatization of the ring, to provide 4-hydroxybenzoate (4HB) for the ubiquinone pathway. The sequence is that of Probable chorismate pyruvate-lyase from Pseudomonas fluorescens (strain ATCC BAA-477 / NRRL B-23932 / Pf-5).